The sequence spans 74 residues: Peptide Im-4 (74 aa).

An N-terminal signal peptide occupies residues 1 to 22; sequence MKFQYLLAIFMIVLVVTDHCQA. Lys39 bears the Lysine amide; partial mark. Residues 40 to 74 constitute a propeptide that is removed on maturation; it reads GRRRRQLEARYEPQQRNFRKREIDFEKLFANMPDY.

This sequence belongs to the non-disulfide-bridged peptide (NDBP) superfamily. Short antimicrobial peptide (group 4) family. In terms of tissue distribution, expressed by the venom gland.

The protein resides in the secreted. It is found in the target cell membrane. Its function is as follows. Antimicrobial peptide that probably forms pores in target membranes. Has antibacterial activity against Gram-positive bacteria S.aureus NBRC 13276 (MIC=5-10 uM) and B.subtilis NBRC 3009 (MIC=2.5-5 uM) but not against Gram-negative bacterium E.coli NBRC 3972. This Isometrus maculatus (Lesser brown scorpion) protein is Peptide Im-4.